We begin with the raw amino-acid sequence, 877 residues long: Phosphoenolpyruvate carboxylase (877 aa).

Active-site residues include histidine 138 and lysine 543.

It belongs to the PEPCase type 1 family. It depends on Mg(2+) as a cofactor.

It carries out the reaction oxaloacetate + phosphate = phosphoenolpyruvate + hydrogencarbonate. In terms of biological role, forms oxaloacetate, a four-carbon dicarboxylic acid source for the tricarboxylic acid cycle. The sequence is that of Phosphoenolpyruvate carboxylase from Aeromonas salmonicida (strain A449).